A 1242-amino-acid chain; its full sequence is Structural polyprotein (1242 aa).

The necessary for nucleocapsid assembly and virus assembly stretch occupies residues 1–36 (MFPYPTLNYPPMAPVNPMAYRDPNPPRRRWRPFRPP). The interval 1 to 104 (MFPYPTLNYP…KQKPGKRQRM (104 aa)) is disordered. The interval 37-70 (LAAQIEDLRRSIANLTFKQRAPNPPAGPPAKRKK) is host transcription inhibition. A Supraphysiological nuclear export signal motif is present at residues 44–51 (LRRSIANL). Residues 66–104 (AKRKKPAPKPKPAAPKKKRQPPPAKKQKRKQKPGKRQRM) show a composition bias toward basic residues. The Nuclear localization signal signature appears at 67-70 (KRKK). The interval 83–113 (KRQPPPAKKQKRKQKPGKRQRMCMKLESDKT) is binding to the viral RNA. The ribosome-binding stretch occupies residues 98-112 (PGKRQRMCMKLESDK). Position 110 is a phosphoserine (Ser110). A Peptidase S3 domain is found at 112–261 (KTFPIMLNGQ…KDTPEGSEPW (150 aa)). Thr113 is subject to Phosphothreonine. Catalysis depends on charge relay system residues His138, Asp160, and Ser212. The interval 262-273 (SLTTVMCVLANI) is functions as an uncleaved signal peptide for the precursor of protein E3/E2. Asn272 carries an N-linked (GlcNAc...) asparagine; by host glycan. Topologically, residues 325–688 (DLETHFTQYK…YYYNRYPMTT (364 aa)) are extracellular. The chain crosses the membrane as a helical span at residues 689 to 709 (VIGLCTCVAIIMVSCVTSVWL). The Cytoplasmic portion of the chain corresponds to 710–744 (LCRTRNLCITPYRLAPNAQVPILLAVLCCVKPTRA). Residues Cys717, Cys737, and Cys738 are each lipidated (S-palmitoyl cysteine; by host). The tract at residues 717 to 737 (CITPYRLAPNAQVPILLAVLC) is transient transmembrane before p62-6K protein processing. Residues 745 to 759 (DDTLQVLNYLWNNNQ) are Extracellular-facing. 2 consecutive transmembrane segments (helical) span residues 760-780 (NFFWMQTLIPLAALIVCMRML) and 781-801 (RCLLCCGPAFLLVCGALGAAA). Over 802–1218 (YEHAAVMPNK…WSWLKVLVGS (417 aa)) the chain is Extracellular. Disulfide bonds link Cys850/Cys915, Cys863/Cys895, Cys864/Cys897, Cys869/Cys879, Cys1061/Cys1073, Cys1103/Cys1178, Cys1108/Cys1182, and Cys1130/Cys1172. The tract at residues 885–902 (VYPFMWGGAYCFCDTENT) is E1 fusion peptide loop. A helical membrane pass occupies residues 1219-1239 (TSAFIVLGLIATAVVALVLFT). Residues 1240–1242 (HRH) lie on the Cytoplasmic side of the membrane.

As to quaternary structure, part of a tetrameric complex composed of host CRM1, host importin alpha/beta dimer and the viral capsid; this complex blocks the receptor-mediated transport through the nuclear pore. Interacts with host phosphatase PPP1CA; this interaction dephosphorylates the capsid protein, which increases its ability to bind to the viral genome. Interacts with host karyopherin KPNA4; this interaction allows the nuclear import of the viral capsid protein. Interacts with spike glycoprotein E2. Interacts with host IRAK1; the interaction leads to inhibition of IRAK1-dependent signaling. The precursor of protein E3/E2 and E1 form a heterodimer shortly after synthesis. In terms of assembly, the precursor of protein E3/E2 and E1 form a heterodimer shortly after synthesis. Processing of the precursor of protein E3/E2 into E2 and E3 results in a heterodimer of the spike glycoproteins E2 and E1. Spike at virion surface are constituted of three E2-E1 heterodimers. After target cell attachment and endocytosis, E1 change conformation to form homotrimers. Interacts with 6K protein. As to quaternary structure, processing of the precursor of protein E3/E2 into E2 and E3 results in a heterodimer of the spike glycoproteins E2 and E1. Spike at virion surface are constituted of three E2-E1 heterodimers. Interacts with 6K protein. Interacts with spike glycoprotein E1. Interacts with spike glycoprotein E2. Post-translationally, structural polyprotein: Specific enzymatic cleavages in vivo yield mature proteins. Capsid protein is auto-cleaved during polyprotein translation, unmasking a signal peptide at the N-terminus of the precursor of E3/E2. The remaining polyprotein is then targeted to the host endoplasmic reticulum, where host signal peptidase cleaves it into pE2, 6K and E1 proteins. pE2 is further processed to mature E3 and E2 by host furin in trans-Golgi vesicle. Phosphorylated on serine and threonine residues. In terms of processing, palmitoylated via thioester bonds. These palmitoylations may induce disruption of the C-terminus transmembrane. This would result in the reorientation of E2 C-terminus from lumenal to cytoplasmic side. Post-translationally, N-glycosylated. Palmitoylated via thioester bonds.

The protein resides in the virion. It localises to the host cytoplasm. It is found in the host cell membrane. Its subcellular location is the host nucleus. The protein localises to the virion membrane. The catalysed reaction is Autocatalytic release of the core protein from the N-terminus of the togavirus structural polyprotein by hydrolysis of a -Trp-|-Ser- bond.. Its function is as follows. Forms an icosahedral capsid with a T=4 symmetry composed of 240 copies of the capsid protein surrounded by a lipid membrane through which penetrate 80 spikes composed of trimers of E1-E2 heterodimers. The capsid protein binds to the viral RNA genome at a site adjacent to a ribosome binding site for viral genome translation following genome release. Possesses a protease activity that results in its autocatalytic cleavage from the nascent structural protein. Following its self-cleavage, the capsid protein transiently associates with ribosomes, and within several minutes the protein binds to viral RNA and rapidly assembles into icosahedric core particles. The resulting nucleocapsid eventually associates with the cytoplasmic domain of the spike glycoprotein E2 at the cell membrane, leading to budding and formation of mature virions. In case of infection, new virions attach to target cells and after clathrin-mediated endocytosis their membrane fuses with the host endosomal membrane. This leads to the release of the nucleocapsid into the cytoplasm, followed by an uncoating event necessary for the genomic RNA to become accessible. The uncoating might be triggered by the interaction of capsid proteins with ribosomes. Binding of ribosomes would release the genomic RNA since the same region is genomic RNA-binding and ribosome-binding. Specifically inhibits interleukin-1 receptor-associated kinase 1/IRAK1-dependent signaling during viral entry, representing a means by which the alphaviruses may evade innate immune detection and activation prior to viral gene expression. Inhibits host transcription. Forms a tetrameric complex with XPO1/CRM1 and the nuclear import receptor importin. This complex blocks the central channel of host nuclear pores thereby inhibiting the receptor-mediated nuclear transport and thus the host mRNA and rRNA transcription. The inhibition of transcription is linked to a cytopathic effect on the host cell. In terms of biological role, provides the signal sequence for the translocation of the precursor of protein E3/E2 to the host endoplasmic reticulum. Furin-cleaved E3 remains associated with spike glycoprotein E1 and mediates pH protection of the latter during the transport via the secretory pathway. After virion release from the host cell, the assembly protein E3 is gradually released in the extracellular space. Plays a role in viral attachment to target host cell, by binding to the cell receptor. Synthesized as a p62 precursor which is processed by furin at the cell membrane just before virion budding, giving rise to E2-E1 heterodimer. The p62-E1 heterodimer is stable, whereas E2-E1 is unstable and dissociate at low pH. p62 is processed at the last step, presumably to avoid E1 fusion activation before its final export to cell surface. E2 C-terminus contains a transitory transmembrane that would be disrupted by palmitoylation, resulting in reorientation of the C-terminal tail from lumenal to cytoplasmic side. This step is critical since E2 C-terminus is involved in budding by interacting with capsid proteins. This release of E2 C-terminus in cytoplasm occurs lately in protein export, and precludes premature assembly of particles at the endoplasmic reticulum membrane. Functionally, constitutive membrane protein involved in virus glycoprotein processing, cell permeabilization, and the budding of viral particles. Disrupts the calcium homeostasis of the cell, probably at the endoplasmic reticulum level. This leads to cytoplasmic calcium elevation. Because of its lipophilic properties, the 6K protein is postulated to influence the selection of lipids that interact with the transmembrane domains of the glycoproteins, which, in turn, affects the deformability of the bilayer required for the extreme curvature that occurs as budding proceeds. Present in low amount in virions, about 3% compared to viral glycoproteins. Its function is as follows. Class II viral fusion protein. Fusion activity is inactive as long as E1 is bound to E2 in mature virion. After virus attachment to target cell and endocytosis, acidification of the endosome would induce dissociation of E1/E2 heterodimer and concomitant trimerization of the E1 subunits. This E1 trimer is fusion active, and promotes release of viral nucleocapsid in cytoplasm after endosome and viral membrane fusion. Efficient fusion requires the presence of cholesterol and sphingolipid in the target membrane. Fusion is optimal at levels of about 1 molecule of cholesterol per 2 molecules of phospholipids, and is specific for sterols containing a 3-beta-hydroxyl group. The polypeptide is Structural polyprotein (Aedes (Human)).